The chain runs to 434 residues: Probable exopolygalacturonase X (434 aa).

The signal sequence occupies residues 1–23; that stretch reads MKFLHTVAQTATLLLSLGASVEG. The tract at residues 35–54 is disordered; the sequence is HHPFRPLPASTPRTKTCHVR. N-linked (GlcNAc...) asparagine glycans are attached at residues N113, N129, and N199. One copy of the PbH1 1 repeat lies at 231–252; the sequence is SSNIVIQNSVVNNGDDCVSFKP. Residue D245 is the Proton donor of the active site. A disulfide bridge links C247 with C264. N253 and N265 each carry an N-linked (GlcNAc...) asparagine glycan. One copy of the PbH1 2 repeat lies at 254–274; the sequence is STDILVQNMHCNGSHGISVGS. The active site involves H268. N-linked (GlcNAc...) asparagine glycans are attached at residues N292, N297, N329, N354, and N364. The stretch at 327 to 348 is one PbH1 3 repeat; it reads VSNITYDRMYIENVDWAIEVTQ. The PbH1 4 repeat unit spans residues 362-394; that stretch reads PSNLTISDVHIKNMWGTTSGKRDPNVGTIVCSS. C392 and C398 form a disulfide bridge. N-linked (GlcNAc...) asparagine glycosylation is found at N407 and N430.

This sequence belongs to the glycosyl hydrolase 28 family.

It localises to the secreted. It carries out the reaction [(1-&gt;4)-alpha-D-galacturonosyl](n) + H2O = alpha-D-galacturonate + [(1-&gt;4)-alpha-D-galacturonosyl](n-1). Functionally, specific in hydrolyzing the terminal glycosidic bond of polygalacturonic acid and oligogalacturonates. The protein is Probable exopolygalacturonase X (pgaX) of Aspergillus terreus (strain NIH 2624 / FGSC A1156).